A 356-amino-acid chain; its full sequence is D-alanine--D-alanine ligase (356 aa).

The 206-residue stretch at 134–339 folds into the ATP-grasp domain; that stretch reads KQLFAHRGLP…YADLITKLIE (206 aa). An ATP-binding site is contributed by 167–222; it reads KDKLEFPVFVKPANLGSSVGISKCNNEEELKSGIEEAFQFDRKLVIEQGIEAREIE. Residues Asp-293, Glu-306, and Asn-308 each coordinate Mg(2+).

Belongs to the D-alanine--D-alanine ligase family. Mg(2+) serves as cofactor. Requires Mn(2+) as cofactor.

It is found in the cytoplasm. The catalysed reaction is 2 D-alanine + ATP = D-alanyl-D-alanine + ADP + phosphate + H(+). It functions in the pathway cell wall biogenesis; peptidoglycan biosynthesis. In terms of biological role, cell wall formation. This Staphylococcus carnosus (strain TM300) protein is D-alanine--D-alanine ligase.